A 135-amino-acid polypeptide reads, in one-letter code: uncharacterized protein (135 aa).

This is an uncharacterized protein from Archaeoglobus fulgidus (strain ATCC 49558 / DSM 4304 / JCM 9628 / NBRC 100126 / VC-16).